Here is a 128-residue protein sequence, read N- to C-terminus: MHHIELYVSDLEASRRFWGWFLKELGYKEYQKWSSGISWKKDRFYLVIVQAKEPFLEPEYHRCRVGLNHLAFHAESKLQVDQMTEKLTAKGYRVLYRDRHPFAGGDGHYAVFCEDPDRIKVELVAPSC.

The VOC domain occupies 1 to 126 (MHHIELYVSD…DRIKVELVAP (126 aa)).

This is an uncharacterized protein from Bacillus subtilis (strain 168).